Reading from the N-terminus, the 742-residue chain is MTISNTRPITPDLIASHGLKPDEYERILNLIGREPTFTELGIFSAMWNEHCSYKSSKKWLRMLPTKGPRVIQGPGENAGVVDIDDGDCVVFKMESHNHPSYIEPYQGAATGVGGILRDVFTMGARPIAAMNALRFGSPDHPKTRHLVSGVVAGVGGYGNSFGVPTVGGEVEFDARYNGNILVNAFAAGLAKSDAIFYSKAEGVGLPVVYLGAKTGRDGVGGATMASAEFDESIEEKRPTVQVGDPFTEKCLLEACLELMQTGAVIAIQDMGAAGLTCSAVEMGAKGDLGIELDLDKVPVREEHMTAYEMMLSESQERMLMVLRPEKEEEAKAIFVKWGLDFAIVGKTTDDLRFRILHQGDEVANLPIKELGDEAPEYDRPWTPAKTPSPLATNDIPQADVAEALLKLVGSANNSSRRWVYEQYDTLIQGNSLQLPGGDAGVVRVEGHATKALAFSSDVTPRYVEADPYEGGKQAVAECWRNLTATGALPLAATDNLNFGNPERPEIMSQFVHAIKGIGEACRALDFPIVSGNVSLYNETNGQGILPTPTIGGVGLISDWARMARIRFAAADEAILLAGAPEGMGSHIAQSVYMRDIHGRTDGPAPHVDLAHERKIGDFVRDLIADGLVTAVHDCSSGGLALAVAEMAIASGIGATIAAPENDPIAAFYGEDQGRYVVTVAADKIDAVAARAAVAGIDLPVIGKTGGDSVKLGDANTVSVNELRSAHEAWFPTYMGGDLAPDN.

Residue histidine 50 is part of the active site. Tyrosine 53 and lysine 92 together coordinate ATP. Glutamate 94 is a binding site for Mg(2+). Residues 95-98 (SHNH) and arginine 117 each bind substrate. Residue histidine 96 is the Proton acceptor of the active site. Residue aspartate 118 coordinates Mg(2+). Glutamine 241 serves as a coordination point for substrate. Aspartate 269 contacts Mg(2+). 313 to 315 (ESQ) is a substrate binding site. ATP contacts are provided by aspartate 494 and glycine 531. Position 532 (asparagine 532) interacts with Mg(2+). Serine 534 is a substrate binding site.

The protein belongs to the FGAMS family. As to quaternary structure, monomer. Part of the FGAM synthase complex composed of 1 PurL, 1 PurQ and 2 PurS subunits.

The protein resides in the cytoplasm. It catalyses the reaction N(2)-formyl-N(1)-(5-phospho-beta-D-ribosyl)glycinamide + L-glutamine + ATP + H2O = 2-formamido-N(1)-(5-O-phospho-beta-D-ribosyl)acetamidine + L-glutamate + ADP + phosphate + H(+). Its pathway is purine metabolism; IMP biosynthesis via de novo pathway; 5-amino-1-(5-phospho-D-ribosyl)imidazole from N(2)-formyl-N(1)-(5-phospho-D-ribosyl)glycinamide: step 1/2. Part of the phosphoribosylformylglycinamidine synthase complex involved in the purines biosynthetic pathway. Catalyzes the ATP-dependent conversion of formylglycinamide ribonucleotide (FGAR) and glutamine to yield formylglycinamidine ribonucleotide (FGAM) and glutamate. The FGAM synthase complex is composed of three subunits. PurQ produces an ammonia molecule by converting glutamine to glutamate. PurL transfers the ammonia molecule to FGAR to form FGAM in an ATP-dependent manner. PurS interacts with PurQ and PurL and is thought to assist in the transfer of the ammonia molecule from PurQ to PurL. The sequence is that of Phosphoribosylformylglycinamidine synthase subunit PurL from Sinorhizobium fredii (strain NBRC 101917 / NGR234).